A 242-amino-acid chain; its full sequence is 7-cyano-7-deazaguanine synthase (242 aa).

ATP is bound at residue Phe-12–Leu-22. Residues Cys-200, Cys-215, Cys-218, and Cys-221 each contribute to the Zn(2+) site.

It belongs to the QueC family. The cofactor is Zn(2+).

It catalyses the reaction 7-carboxy-7-deazaguanine + NH4(+) + ATP = 7-cyano-7-deazaguanine + ADP + phosphate + H2O + H(+). It participates in purine metabolism; 7-cyano-7-deazaguanine biosynthesis. Its function is as follows. Catalyzes the ATP-dependent conversion of 7-carboxy-7-deazaguanine (CDG) to 7-cyano-7-deazaguanine (preQ(0)). In Gluconobacter oxydans (strain 621H) (Gluconobacter suboxydans), this protein is 7-cyano-7-deazaguanine synthase.